We begin with the raw amino-acid sequence, 192 residues long: Imidazoleglycerol-phosphate dehydratase (192 aa).

Belongs to the imidazoleglycerol-phosphate dehydratase family.

The protein localises to the cytoplasm. It carries out the reaction D-erythro-1-(imidazol-4-yl)glycerol 3-phosphate = 3-(imidazol-4-yl)-2-oxopropyl phosphate + H2O. It functions in the pathway amino-acid biosynthesis; L-histidine biosynthesis; L-histidine from 5-phospho-alpha-D-ribose 1-diphosphate: step 6/9. This Staphylococcus aureus (strain bovine RF122 / ET3-1) protein is Imidazoleglycerol-phosphate dehydratase.